The following is a 437-amino-acid chain: UDP-N-acetylmuramate--L-alanine ligase (437 aa).

Residue 114–120 (GTHGKTS) participates in ATP binding.

The protein belongs to the MurCDEF family.

The protein resides in the cytoplasm. The enzyme catalyses UDP-N-acetyl-alpha-D-muramate + L-alanine + ATP = UDP-N-acetyl-alpha-D-muramoyl-L-alanine + ADP + phosphate + H(+). It participates in cell wall biogenesis; peptidoglycan biosynthesis. Functionally, cell wall formation. In Lactobacillus acidophilus (strain ATCC 700396 / NCK56 / N2 / NCFM), this protein is UDP-N-acetylmuramate--L-alanine ligase.